The following is a 217-amino-acid chain: N-(5'-phosphoribosyl)anthranilate isomerase (217 aa).

It belongs to the TrpF family.

It catalyses the reaction N-(5-phospho-beta-D-ribosyl)anthranilate = 1-(2-carboxyphenylamino)-1-deoxy-D-ribulose 5-phosphate. The protein operates within amino-acid biosynthesis; L-tryptophan biosynthesis; L-tryptophan from chorismate: step 3/5. The chain is N-(5'-phosphoribosyl)anthranilate isomerase from Chlorobium phaeovibrioides (strain DSM 265 / 1930) (Prosthecochloris vibrioformis (strain DSM 265)).